The sequence spans 1388 residues: DNA-directed RNA polymerase subunit beta (1388 aa).

This sequence belongs to the RNA polymerase beta chain family. As to quaternary structure, the RNAP catalytic core consists of 2 alpha, 1 beta, 1 beta' and 1 omega subunit. When a sigma factor is associated with the core the holoenzyme is formed, which can initiate transcription.

The enzyme catalyses RNA(n) + a ribonucleoside 5'-triphosphate = RNA(n+1) + diphosphate. In terms of biological role, DNA-dependent RNA polymerase catalyzes the transcription of DNA into RNA using the four ribonucleoside triphosphates as substrates. In Xylella fastidiosa (strain Temecula1 / ATCC 700964), this protein is DNA-directed RNA polymerase subunit beta.